The sequence spans 49 residues: Large ribosomal subunit protein bL33 (49 aa).

Belongs to the bacterial ribosomal protein bL33 family.

In Syntrophobacter fumaroxidans (strain DSM 10017 / MPOB), this protein is Large ribosomal subunit protein bL33.